A 170-amino-acid chain; its full sequence is Ribosome maturation factor RimM (170 aa).

The 73-residue stretch at 93 to 165 folds into the PRC barrel domain; that stretch reads PDEFHDHELI…RVVIDPPPGL (73 aa).

The protein belongs to the RimM family. Binds ribosomal protein uS19.

Its subcellular location is the cytoplasm. Functionally, an accessory protein needed during the final step in the assembly of 30S ribosomal subunit, possibly for assembly of the head region. Essential for efficient processing of 16S rRNA. May be needed both before and after RbfA during the maturation of 16S rRNA. It has affinity for free ribosomal 30S subunits but not for 70S ribosomes. The polypeptide is Ribosome maturation factor RimM (Thermobifida fusca (strain YX)).